Reading from the N-terminus, the 634-residue chain is Ankyrin repeat and SOCS box protein 2 (634 aa).

The region spanning 26-45 (SEEELVQMAIEQSLADKTRG) is the UIM domain. Residues 35–81 (IEQSLADKTRGPTPAETSVSSQTNHQPGHIHPWTRSSSPPESPPARA) are disordered. The span at 49-60 (AETSVSSQTNHQ) shows a compositional bias: polar residues. ANK repeat units follow at residues 104–133 (AAMDPVLKAIKEGDEEALKAMIQDGKNLAE), 137–167 (EGWLPLHEAAYYGKLGCLKVLQRAYPGTIDQ), 171–200 (QEETALYLATCREHLDCLLSLLQAGAEPDI), 204–233 (SRETPLYKACERKNAEAVRILVQYNADANH), 237–266 (RGWTALHESVSRNDLEVMEILVSGGAKVEA), 270–299 (YSITPLFVAAQSGQLEALRFLAKHGADINT), 303–332 (DSASALYEACKNEHEDVVEFLLSQGADANK), 336–365 (DGLLPLHVASKKGNYRIVQMLLPVTSRTRV), 368–397 (SGISPLHLAAERNHDAVLEALLAARFDVNT), 410–439 (RRTSALYFAVVNNNVYATELLLLAGADPNR), 440–469 (DVISPLLVAIRHGCLRTMQLLLDHGANIDA), and 476–504 (TAFPATIMFAMKCLSLLKFLMDLGCDGEP). Serine 371 is subject to Phosphoserine. The SOCS box domain maps to 580-634 (EDWAVIKEKAEPPRPLAHLCRLRVRKAIGKYRIKLLDTLPLPGRLIRYLKYENTQ).

The protein belongs to the ankyrin SOCS box (ASB) family. As to quaternary structure, component of a probable ECS E3 ubiquitin-protein ligase complex which contains CUL5, either RBX1 or RNF7/RBX2, Elongin BC complex (ELOB and ELOC) and ASB2. Interacts with SKP2. Through its interaction with SKP2, likely to bridge the formation of dimeric E3-ubiquitin-protein ligase complexes composed of an ECS complex and an SCF(SKP2) complex. Interacts with JAK2; the interaction targets JAK2 for Notch-mediated proteasomal degradation. Interacts with TCF3/E2A; the interaction is mediated by SKP2 and targets TCF3 for Notch-mediated proteasomal degradation. Interacts with DES. In terms of processing, monoubiquitinated.

Its subcellular location is the cytoplasm. The protein localises to the cytoskeleton. It localises to the stress fiber. It is found in the myofibril. The protein resides in the sarcomere. Its subcellular location is the z line. Its pathway is protein modification; protein ubiquitination. In terms of biological role, substrate-recognition component of a SCF-like ECS (Elongin-Cullin-SOCS-box protein) E3 ubiquitin-protein ligase complex which mediates the ubiquitination and subsequent proteasomal degradation of target proteins. Mediates Notch-induced ubiquitination and degradation of substrates including E2A and JAK2. Required during embryonic heart development for complete heart looping. Required for cardiomyocyte differentiation. Involved in myogenic differentiation and targets filamin FLNB for proteasomal degradation but not filamin FLNA. Also targets DES for proteasomal degradation. Acts as a negative regulator of skeletal muscle mass. This Rattus norvegicus (Rat) protein is Ankyrin repeat and SOCS box protein 2.